The chain runs to 525 residues: GMP synthase [glutamine-hydrolyzing] (525 aa).

Residues 12–206 (RILIIDFGSQ…THGICGCGGD (195 aa)) form the Glutamine amidotransferase type-1 domain. C90 functions as the Nucleophile in the catalytic mechanism. Catalysis depends on residues H180 and E182. Residues 207 to 399 (WTMAAFKDQA…LGLPDEMVGR (193 aa)) form the GMPS ATP-PPase domain. 234–240 (SGGVDSS) contacts ATP.

As to quaternary structure, homodimer.

The enzyme catalyses XMP + L-glutamine + ATP + H2O = GMP + L-glutamate + AMP + diphosphate + 2 H(+). It functions in the pathway purine metabolism; GMP biosynthesis; GMP from XMP (L-Gln route): step 1/1. Its function is as follows. Catalyzes the synthesis of GMP from XMP. This chain is GMP synthase [glutamine-hydrolyzing], found in Rhodospirillum rubrum (strain ATCC 11170 / ATH 1.1.1 / DSM 467 / LMG 4362 / NCIMB 8255 / S1).